The chain runs to 463 residues: Zinc finger protein interacting with ribonucleoprotein K (463 aa).

Residues 14 to 89 enclose the KRAB domain; the sequence is VTFQDVAICF…PKTNLCEKCV (76 aa). Disordered stretches follow at residues 106–128 and 171–211; these read HSTEASSKVDQHQDHNSTGKPLE and KYRK…TSNG. The span at 174–191 shows a compositional bias: basic and acidic residues; that stretch reads KSTEGRKETSHESDKSEE. Polar residues predominate over residues 192–201; the sequence is CQSLSSQKQT. C2H2-type zinc fingers lie at residues 215-237, 243-265, 271-293, 299-321, 327-349, 355-377, 383-405, 411-433, and 439-461; these read YECSKCGKTFRGKYSLDQHQRVH, WECRDCGKFFSQTSHLNDHRRIH, YECSECGKLFRQNSSLVDHQKTH, YECSQCGKSFSQKATLVKHKRVH, YKCSECGNSFSQSAILNQHRRIH, YECRECGKSFSQKATLIKHQRVH, YKCSECGKSFSQSSILIQHRRIH, YECSQCGKSFSQKSGLIQHQVVH, and YECDTCGNSFSQCSSLIHHQKCH.

This sequence belongs to the krueppel C2H2-type zinc-finger protein family. Interacts with HNRPK. Expressed in ovary and liver, and at lower levels in brain and muscle.

The protein resides in the nucleus. May be a transcriptional repressor. The polypeptide is Zinc finger protein interacting with ribonucleoprotein K (Zik1) (Mus musculus (Mouse)).